We begin with the raw amino-acid sequence, 418 residues long: MDDQQLTIQQIQQLHMLLQQQQQQQQQQQQQQQQQQQQLQQQNFQLTPQNFQIPVNNNNNNNNNSNNNNNNETAFNITSQNNSIAANLNNDTNIINTTTTTTNNNNNNNNNNNNNNNNNNNNNNNNNNNNNNNTAPNQKFPTRKYKKQKDKLAELGIDVELSKKPTAAVKKKPPAKKSAKNAASQPTSPTLSTTNTSSAFTTAVLDTKKRKNQELLDYSDNSEESDSDEEDFENGDNENGDFPGGGDRKNRRLLKNREAAQLFRQRQKEYINSLESKASSLEASNTTALSKVSHLTEENQLMKDKVRYLKNFVKQAVSISLPMSVVNQDNINNLNNNLNGLQNQQNNNNNNNNNNNNNNNNNNNNNNNNNNNNNQNNFNNNNNNNINNNITFNNNNNNNSNNNNSNNIDSLLFNLPPD.

Positions 8-47 (IQQIQQLHMLLQQQQQQQQQQQQQQQQQQQQLQQQNFQLT) form a coiled coil. Composition is skewed to low complexity over residues 51–71 (FQIP…NNNN) and 95–134 (INTT…NNNT). Disordered stretches follow at residues 51–75 (FQIP…ETAF), 95–149 (INTT…KKQK), 165–196 (PTAA…TTNT), and 211–252 (KNQE…KNRR). The span at 169–179 (VKKKPPAKKSA) shows a compositional bias: basic residues. A compositionally biased stretch (low complexity) spans 180–196 (KNAASQPTSPTLSTTNT). Residues 220–239 (DNSEESDSDEEDFENGDNEN) are compositionally biased toward acidic residues. Positions 246–309 (GDRKNRRLLK…QLMKDKVRYL (64 aa)) constitute a bZIP domain. The segment at 248–268 (RKNRRLLKNREAAQLFRQRQK) is basic motif. The segment at 274-281 (LESKASSL) is leucine-zipper. Residues 324–362 (SVVNQDNINNLNNNLNGLQNQQNNNNNNNNNNNNNNNNN) are a coiled coil. Residues 336–418 (NNLNGLQNQQ…DSLLFNLPPD (83 aa)) form a disordered region.

This sequence belongs to the bZIP family.

It is found in the nucleus. In terms of biological role, probable transcriptional regulator. This Dictyostelium discoideum (Social amoeba) protein is Probable basic-leucine zipper transcription factor E (bzpE).